Consider the following 186-residue polypeptide: Pyridoxal 5'-phosphate synthase subunit PdxT (186 aa).

46–48 (GES) lines the L-glutamine pocket. The active-site Nucleophile is Cys-75. L-glutamine-binding positions include Arg-101 and 129-130 (IR). Residues His-165 and Glu-167 each act as charge relay system in the active site.

Belongs to the glutaminase PdxT/SNO family. As to quaternary structure, in the presence of PdxS, forms a dodecamer of heterodimers. Only shows activity in the heterodimer.

The enzyme catalyses aldehydo-D-ribose 5-phosphate + D-glyceraldehyde 3-phosphate + L-glutamine = pyridoxal 5'-phosphate + L-glutamate + phosphate + 3 H2O + H(+). The catalysed reaction is L-glutamine + H2O = L-glutamate + NH4(+). It functions in the pathway cofactor biosynthesis; pyridoxal 5'-phosphate biosynthesis. In terms of biological role, catalyzes the hydrolysis of glutamine to glutamate and ammonia as part of the biosynthesis of pyridoxal 5'-phosphate. The resulting ammonia molecule is channeled to the active site of PdxS. This chain is Pyridoxal 5'-phosphate synthase subunit PdxT, found in Staphylococcus aureus (strain Mu3 / ATCC 700698).